The primary structure comprises 333 residues: 4-hydroxy-3-methylbut-2-enyl diphosphate reductase (333 aa).

[4Fe-4S] cluster is bound at residue C20. (2E)-4-hydroxy-3-methylbut-2-enyl diphosphate contacts are provided by H49 and H85. Positions 49 and 85 each coordinate dimethylallyl diphosphate. Positions 49 and 85 each coordinate isopentenyl diphosphate. C107 is a [4Fe-4S] cluster binding site. Residue H135 coordinates (2E)-4-hydroxy-3-methylbut-2-enyl diphosphate. H135 contributes to the dimethylallyl diphosphate binding site. An isopentenyl diphosphate-binding site is contributed by H135. E137 acts as the Proton donor in catalysis. T176 contacts (2E)-4-hydroxy-3-methylbut-2-enyl diphosphate. C206 is a [4Fe-4S] cluster binding site. (2E)-4-hydroxy-3-methylbut-2-enyl diphosphate contacts are provided by S234, S235, N236, and S279. Dimethylallyl diphosphate is bound by residues S234, S235, N236, and S279. Residues S234, S235, N236, and S279 each contribute to the isopentenyl diphosphate site.

The protein belongs to the IspH family. Requires [4Fe-4S] cluster as cofactor.

It catalyses the reaction isopentenyl diphosphate + 2 oxidized [2Fe-2S]-[ferredoxin] + H2O = (2E)-4-hydroxy-3-methylbut-2-enyl diphosphate + 2 reduced [2Fe-2S]-[ferredoxin] + 2 H(+). The enzyme catalyses dimethylallyl diphosphate + 2 oxidized [2Fe-2S]-[ferredoxin] + H2O = (2E)-4-hydroxy-3-methylbut-2-enyl diphosphate + 2 reduced [2Fe-2S]-[ferredoxin] + 2 H(+). Its pathway is isoprenoid biosynthesis; dimethylallyl diphosphate biosynthesis; dimethylallyl diphosphate from (2E)-4-hydroxy-3-methylbutenyl diphosphate: step 1/1. It functions in the pathway isoprenoid biosynthesis; isopentenyl diphosphate biosynthesis via DXP pathway; isopentenyl diphosphate from 1-deoxy-D-xylulose 5-phosphate: step 6/6. Catalyzes the conversion of 1-hydroxy-2-methyl-2-(E)-butenyl 4-diphosphate (HMBPP) into a mixture of isopentenyl diphosphate (IPP) and dimethylallyl diphosphate (DMAPP). Acts in the terminal step of the DOXP/MEP pathway for isoprenoid precursor biosynthesis. This Rhizobium leguminosarum bv. trifolii (strain WSM2304) protein is 4-hydroxy-3-methylbut-2-enyl diphosphate reductase.